Reading from the N-terminus, the 347-residue chain is S-adenosylmethionine:tRNA ribosyltransferase-isomerase (347 aa).

It belongs to the QueA family. Monomer.

The protein localises to the cytoplasm. It catalyses the reaction 7-aminomethyl-7-carbaguanosine(34) in tRNA + S-adenosyl-L-methionine = epoxyqueuosine(34) in tRNA + adenine + L-methionine + 2 H(+). Its pathway is tRNA modification; tRNA-queuosine biosynthesis. Its function is as follows. Transfers and isomerizes the ribose moiety from AdoMet to the 7-aminomethyl group of 7-deazaguanine (preQ1-tRNA) to give epoxyqueuosine (oQ-tRNA). This chain is S-adenosylmethionine:tRNA ribosyltransferase-isomerase, found in Xylella fastidiosa (strain 9a5c).